Consider the following 157-residue polypeptide: Protein GrpE (157 aa).

Residues 1 to 10 show a composition bias toward basic and acidic residues; that stretch reads MQEENQHPEQ. A disordered region spans residues 1–21; that stretch reads MQEENQHPEQDDISEAQDAGA.

The protein belongs to the GrpE family. In terms of assembly, homodimer.

Its subcellular location is the cytoplasm. Functionally, participates actively in the response to hyperosmotic and heat shock by preventing the aggregation of stress-denatured proteins, in association with DnaK and GrpE. It is the nucleotide exchange factor for DnaK and may function as a thermosensor. Unfolded proteins bind initially to DnaJ; upon interaction with the DnaJ-bound protein, DnaK hydrolyzes its bound ATP, resulting in the formation of a stable complex. GrpE releases ADP from DnaK; ATP binding to DnaK triggers the release of the substrate protein, thus completing the reaction cycle. Several rounds of ATP-dependent interactions between DnaJ, DnaK and GrpE are required for fully efficient folding. This Methylovorus sp. (strain SS1 / DSM 11726) protein is Protein GrpE.